The following is a 193-amino-acid chain: Pyridoxal 5'-phosphate synthase subunit PdxT (193 aa).

50–52 (GES) contacts L-glutamine. The active-site Nucleophile is C82. Residues R109 and 136–137 (IR) each bind L-glutamine. Active-site charge relay system residues include H172 and E174.

Belongs to the glutaminase PdxT/SNO family. In terms of assembly, in the presence of PdxS, forms a dodecamer of heterodimers. Only shows activity in the heterodimer.

The catalysed reaction is aldehydo-D-ribose 5-phosphate + D-glyceraldehyde 3-phosphate + L-glutamine = pyridoxal 5'-phosphate + L-glutamate + phosphate + 3 H2O + H(+). It carries out the reaction L-glutamine + H2O = L-glutamate + NH4(+). The protein operates within cofactor biosynthesis; pyridoxal 5'-phosphate biosynthesis. Its function is as follows. Catalyzes the hydrolysis of glutamine to glutamate and ammonia as part of the biosynthesis of pyridoxal 5'-phosphate. The resulting ammonia molecule is channeled to the active site of PdxS. The sequence is that of Pyridoxal 5'-phosphate synthase subunit PdxT from Streptococcus pneumoniae serotype 2 (strain D39 / NCTC 7466).